The chain runs to 247 residues: Geranylgeranylglyceryl phosphate synthase (247 aa).

2 residues coordinate Mg(2+): D23 and S52. Sn-glycerol 1-phosphate-binding positions include 171–177 (YLEAGSG), 203–204 (GG), and 225–226 (GT).

It belongs to the GGGP/HepGP synthase family. Group II subfamily. Requires Mg(2+) as cofactor.

Its subcellular location is the cytoplasm. It catalyses the reaction sn-glycerol 1-phosphate + (2E,6E,10E)-geranylgeranyl diphosphate = sn-3-O-(geranylgeranyl)glycerol 1-phosphate + diphosphate. Its pathway is membrane lipid metabolism; glycerophospholipid metabolism. Prenyltransferase that catalyzes the transfer of the geranylgeranyl moiety of geranylgeranyl diphosphate (GGPP) to the C3 hydroxyl of sn-glycerol-1-phosphate (G1P). This reaction is the first ether-bond-formation step in the biosynthesis of archaeal membrane lipids. In Methanosarcina acetivorans (strain ATCC 35395 / DSM 2834 / JCM 12185 / C2A), this protein is Geranylgeranylglyceryl phosphate synthase.